We begin with the raw amino-acid sequence, 172 residues long: Lipoprotein signal peptidase (172 aa).

The next 4 membrane-spanning stretches (helical) occupy residues 12-32 (TSAA…VILF), 43-63 (VFAY…LVYN), 77-97 (WQRW…CYLL), and 102-122 (GQKM…GNVI). Active-site residues include D132 and D150. Residues 142–162 (HWPAFNLADSAITVGAVLLVL) traverse the membrane as a helical segment.

This sequence belongs to the peptidase A8 family.

It is found in the cell inner membrane. It catalyses the reaction Release of signal peptides from bacterial membrane prolipoproteins. Hydrolyzes -Xaa-Yaa-Zaa-|-(S,diacylglyceryl)Cys-, in which Xaa is hydrophobic (preferably Leu), and Yaa (Ala or Ser) and Zaa (Gly or Ala) have small, neutral side chains.. It participates in protein modification; lipoprotein biosynthesis (signal peptide cleavage). In terms of biological role, this protein specifically catalyzes the removal of signal peptides from prolipoproteins. This is Lipoprotein signal peptidase from Paraburkholderia phytofirmans (strain DSM 17436 / LMG 22146 / PsJN) (Burkholderia phytofirmans).